The primary structure comprises 558 residues: Germacrene A synthase short form (558 aa).

Positions 311, 315, 455, 459, and 463 each coordinate Mg(2+). The DDXXD motif signature appears at aspartate 311–aspartate 315.

The protein belongs to the terpene synthase family. Mg(2+) is required as a cofactor. Expressed in roots and in green and etiolated seedlings.

It carries out the reaction (2E,6E)-farnesyl diphosphate = (+)-(R)-germacrene A + diphosphate. It functions in the pathway secondary metabolite biosynthesis; terpenoid biosynthesis. Its function is as follows. Involved in sesquiterpene lactone biosynthesis. Produces exclusively (+)-germacrene A. In Cichorium intybus (Chicory), this protein is Germacrene A synthase short form.